The sequence spans 364 residues: Fructose-bisphosphate aldolase A (364 aa).

Threonine 9 is subject to Phosphothreonine. A phosphoserine mark is found at serine 36 and serine 39. Lysine 42 is subject to N6-acetyllysine; alternate. Residue lysine 42 forms a Glycyl lysine isopeptide (Lys-Gly) (interchain with G-Cter in SUMO1); alternate linkage. Lysine 42 participates in a covalent cross-link: Glycyl lysine isopeptide (Lys-Gly) (interchain with G-Cter in SUMO2); alternate. Arginine 43 contacts beta-D-fructose 1,6-bisphosphate. Phosphoserine is present on serine 46. Lysine 99 is modified (N6-(2-hydroxyisobutyryl)lysine). Residue lysine 108 is modified to N6-acetyllysine. Lysine 111 is subject to N6-acetyllysine; alternate. Residue lysine 111 is modified to N6-malonyllysine; alternate. Serine 132 carries the post-translational modification Phosphoserine. Lysine 147 carries the N6-(2-hydroxyisobutyryl)lysine modification. Glutamate 188 serves as the catalytic Proton acceptor. Lysine 230 functions as the Schiff-base intermediate with dihydroxyacetone-P in the catalytic mechanism. Serine 272 is subject to Phosphoserine. Beta-D-fructose 1,6-bisphosphate is bound by residues 272-274 (SGG), serine 301, and arginine 304. An N6-malonyllysine modification is found at lysine 312. The residue at position 330 (lysine 330) is an N6-acetyllysine. Asparagine 361 carries the post-translational modification Deamidated asparagine; in form beta.

This sequence belongs to the class I fructose-bisphosphate aldolase family. In terms of assembly, homotetramer. Interacts with SNX9 and WAS. Interacts with FBP2; the interaction blocks FBP2 inhibition by physiological concentrations of AMP and reduces inhibition by Ca(2+). Asn-361 in form alpha is deaminated to Asp in form beta.

It is found in the cytoplasm. The protein localises to the myofibril. Its subcellular location is the sarcomere. The protein resides in the i band. It localises to the m line. It carries out the reaction beta-D-fructose 1,6-bisphosphate = D-glyceraldehyde 3-phosphate + dihydroxyacetone phosphate. It functions in the pathway carbohydrate degradation; glycolysis; D-glyceraldehyde 3-phosphate and glycerone phosphate from D-glucose: step 4/4. Functionally, plays a key role in glycolysis and gluconeogenesis. In addition, may also function as scaffolding protein. This is Fructose-bisphosphate aldolase A (ALDOA) from Oryctolagus cuniculus (Rabbit).